Here is a 344-residue protein sequence, read N- to C-terminus: Melanocyte-stimulating hormone receptor (344 aa).

The Extracellular portion of the chain corresponds to 1–37 (MPMQGAQRKLLGSLNSTPTATSNPGLAANHTGAPCLE). Asparagine 29 carries an N-linked (GlcNAc...) asparagine glycan. The chain crosses the membrane as a helical span at residues 38–63 (VSIPDGLFLSLGLVSLVENVLVVAAI). The Cytoplasmic segment spans residues 64–72 (AKNRNLHSS). A helical membrane pass occupies residues 73–93 (MYYFICCLALSDLLVSGSNML). At 94-118 (ETAIILLLEAGTLATRASVVQQLHN) the chain is on the extracellular side. A helical membrane pass occupies residues 119–140 (TIDVLTCSSMLCSLCFLGAIAV). Over 141–163 (DRYISIFYALRYHSIMTLPRAQR) the chain is Cytoplasmic. A helical membrane pass occupies residues 164-183 (AIAAIWVASVLSSTLFITYY). At 184 to 191 (DHAAVLLC) the chain is on the extracellular side. The helical transmembrane segment at 192–211 (LVVFFLAMLVLMAVLYVHML) threads the bilayer. Residues 212–240 (ARACQHAQGIIRLHNRQLPAHKGFGLRGA) are Cytoplasmic-facing. Residues 241–266 (ATLTILLGIFFLCWGPFFLHLTLVVF) form a helical membrane-spanning segment. The Extracellular segment spans residues 267-279 (CPQHLTCNCIFKN). Residues 280–300 (FKVFLTLIICNTIIDPLIYAF) traverse the membrane as a helical segment. The Cytoplasmic portion of the chain corresponds to 301 to 344 (RSQELRRTLKEVLLCSSWPGCWAEGGGDSVWPGSCVTLRGPLPP). Residue cysteine 315 is the site of S-palmitoyl cysteine attachment.

This sequence belongs to the G-protein coupled receptor 1 family. In terms of assembly, interacts with MGRN1, but does not undergo MGRN1-mediated ubiquitination; this interaction competes with GNAS-binding and thus inhibits agonist-induced cAMP production. Interacts with OPN3; the interaction results in a decrease in MC1R-mediated cAMP signaling and ultimately a decrease in melanin production in melanocytes.

The protein resides in the cell membrane. Receptor for MSH (alpha, beta and gamma) and ACTH. The activity of this receptor is mediated by G proteins which activate adenylate cyclase. Mediates melanogenesis, the production of eumelanin (black/brown) and phaeomelanin (red/yellow), via regulation of cAMP signaling in melanocytes. The sequence is that of Melanocyte-stimulating hormone receptor (MC1R) from Callithrix jacchus (White-tufted-ear marmoset).